The sequence spans 337 residues: Glucokinase (337 aa).

11 to 16 (ADIGGT) lines the ATP pocket.

This sequence belongs to the bacterial glucokinase family.

The protein localises to the cytoplasm. It carries out the reaction D-glucose + ATP = D-glucose 6-phosphate + ADP + H(+). This chain is Glucokinase, found in Xylella fastidiosa (strain M12).